The following is a 286-amino-acid chain: 4-diphosphocytidyl-2-C-methyl-D-erythritol kinase (286 aa).

Residue K11 is part of the active site. Residue 94–104 participates in ATP binding; the sequence is PMGGGIGGGSS. Residue D136 is part of the active site.

Belongs to the GHMP kinase family. IspE subfamily.

It carries out the reaction 4-CDP-2-C-methyl-D-erythritol + ATP = 4-CDP-2-C-methyl-D-erythritol 2-phosphate + ADP + H(+). The protein operates within isoprenoid biosynthesis; isopentenyl diphosphate biosynthesis via DXP pathway; isopentenyl diphosphate from 1-deoxy-D-xylulose 5-phosphate: step 3/6. In terms of biological role, catalyzes the phosphorylation of the position 2 hydroxy group of 4-diphosphocytidyl-2C-methyl-D-erythritol. This is 4-diphosphocytidyl-2-C-methyl-D-erythritol kinase from Pseudomonas putida (strain ATCC 700007 / DSM 6899 / JCM 31910 / BCRC 17059 / LMG 24140 / F1).